A 919-amino-acid polypeptide reads, in one-letter code: Glutamate receptor ionotropic, kainate 3 (919 aa).

The first 31 residues, 1–31 (MTAPWRRLRSLVWEYWAGLLVCAFWIPDSRG), serve as a signal peptide directing secretion. Residues 32–563 (MPHVIRIGGI…VFSFLNPLSP (532 aa)) are Extracellular-facing. 7 N-linked (GlcNAc...) asparagine glycosylation sites follow: Asn70, Asn76, Asn278, Asn381, Asn415, Asn426, and Asn433. Cys99 and Cys350 are joined by a disulfide. Pro518, Thr520, and Arg525 together coordinate L-glutamate. N-linked (GlcNAc...) asparagine glycans are attached at residues Asn548 and Asn551. A helical membrane pass occupies residues 564–584 (DIWMYVLLAYLGVSCVLFVIA). Residues 585–636 (RFSPYEWYDAHPCNPGSEVVENNFTLLNSFWFGMGSLMQQGSELMPKALSTR) are Cytoplasmic-facing. The chain crosses the membrane as a helical span at residues 637–657 (IIGGIWWFFTLIIISSYTANL). The Extracellular segment spans residues 658–820 (AAFLTVERME…KEASALGIQK (163 aa)). The L-glutamate site is built by Ala691, Thr692, and Glu739. N-linked (GlcNAc...) asparagine glycosylation is present at Asn752. A helical transmembrane segment spans residues 821–841 (IGGIFIVLAAGLVLSVLVAVG). The Cytoplasmic segment spans residues 842 to 919 (EFVYKLRKTA…CSTSLAPVFP (78 aa)). Ser869 carries the phosphoserine modification. A Glycyl lysine isopeptide (Lys-Gly) (interchain with G-Cter in SUMO1) cross-link involves residue Lys887.

It belongs to the glutamate-gated ion channel (TC 1.A.10.1) family. GRIK3 subfamily. In terms of assembly, homotetramer, and heterotetramer with either GRIK4 or GRIK5. Can form functional heteromeric receptors with GRIK2. Interacts with PRKCABP. Interacts with NETO2.

It localises to the cell membrane. The protein localises to the postsynaptic cell membrane. The enzyme catalyses Ca(2+)(in) = Ca(2+)(out). In terms of biological role, ionotropic glutamate receptor that functions as a cation-permeable ligand-gated ion channel, gated by L-glutamate and the glutamatergic agonist kainic acid. Binding of the excitatory neurotransmitter L-glutamate induces a conformation change, leading to the opening of the cation channel, and thereby converts the chemical signal to an electrical impulse. The receptor then desensitizes rapidly and enters a transient inactive state, characterized by the presence of bound agonist. In association with GRIK2, involved in presynaptic facilitation of glutamate release at hippocampal mossy fiber synapses. The chain is Glutamate receptor ionotropic, kainate 3 (GRIK3) from Macaca fascicularis (Crab-eating macaque).